A 745-amino-acid polypeptide reads, in one-letter code: 5-methyltetrahydropteroyltriglutamate--homocysteine methyltransferase (745 aa).

5-methyltetrahydropteroyltri-L-glutamate contacts are provided by residues 17–20 (RELK) and Lys-111. Residues 421–423 (IGS) and Glu-474 each bind L-homocysteine. L-methionine-binding positions include 421–423 (IGS) and Glu-474. Residues 505–506 (RC) and Trp-551 contribute to the 5-methyltetrahydropteroyltri-L-glutamate site. Asp-589 is an L-homocysteine binding site. Asp-589 provides a ligand contact to L-methionine. Glu-595 serves as a coordination point for 5-methyltetrahydropteroyltri-L-glutamate. Zn(2+) contacts are provided by His-631, Cys-633, and Glu-655. The Proton donor role is filled by His-684. Position 716 (Cys-716) interacts with Zn(2+).

The protein belongs to the vitamin-B12 independent methionine synthase family. The cofactor is Zn(2+).

The enzyme catalyses 5-methyltetrahydropteroyltri-L-glutamate + L-homocysteine = tetrahydropteroyltri-L-glutamate + L-methionine. The protein operates within amino-acid biosynthesis; L-methionine biosynthesis via de novo pathway; L-methionine from L-homocysteine (MetE route): step 1/1. Its function is as follows. Catalyzes the transfer of a methyl group from 5-methyltetrahydrofolate to homocysteine resulting in methionine formation. In Thermodesulfovibrio yellowstonii (strain ATCC 51303 / DSM 11347 / YP87), this protein is 5-methyltetrahydropteroyltriglutamate--homocysteine methyltransferase.